Here is a 238-residue protein sequence, read N- to C-terminus: Fmr1 neighbor protein (238 aa).

The disordered stretch occupies residues 1–30 (MPSDRRPSQRRNRSKSRDYRGARSKVTRAD). Residues 1–79 (MPSDRRPSQR…CLQYLWARRH (79 aa)) lie on the Cytoplasmic side of the membrane. A compositionally biased stretch (basic and acidic residues) spans 15–30 (KSRDYRGARSKVTRAD). The helical transmembrane segment at 80–100 (LGLLLLLFWTLVILFRPVNTA) threads the bilayer. The Extracellular portion of the chain corresponds to 101–178 (KLPILAEAAE…VRDKPTQVLR (78 aa)). One can recognise a P-type domain in the interval 118–176 (MLDFFFPTACIIRDNQVVVACNNQPYLSESECLKSKCCSSTSGTIIKCYAPVRDKPTQV). Residues 179–199 (VFGLAAISILVLGFLPMCCCS) form a helical membrane-spanning segment. At 200 to 238 (MCWRRKRMNRMLKVLKKQKSKGKKPKGRKASEERALLSH) the chain is on the cytoplasmic side. Positions 214 to 227 (LKKQKSKGKKPKGR) are enriched in basic residues. The tract at residues 214 to 238 (LKKQKSKGKKPKGRKASEERALLSH) is disordered. The span at 228 to 238 (KASEERALLSH) shows a compositional bias: basic and acidic residues.

It localises to the membrane. This Mus musculus (Mouse) protein is Fmr1 neighbor protein.